The primary structure comprises 1379 residues: DNA-directed RNA polymerase subunit beta'' (1379 aa).

Zn(2+) is bound by residues C220, C291, C298, and C301.

Belongs to the RNA polymerase beta' chain family. RpoC2 subfamily. In plastids the minimal PEP RNA polymerase catalytic core is composed of four subunits: alpha, beta, beta', and beta''. When a (nuclear-encoded) sigma factor is associated with the core the holoenzyme is formed, which can initiate transcription. Zn(2+) is required as a cofactor.

The protein resides in the plastid. The catalysed reaction is RNA(n) + a ribonucleoside 5'-triphosphate = RNA(n+1) + diphosphate. DNA-dependent RNA polymerase catalyzes the transcription of DNA into RNA using the four ribonucleoside triphosphates as substrates. In Cuscuta reflexa (Southern Asian dodder), this protein is DNA-directed RNA polymerase subunit beta''.